We begin with the raw amino-acid sequence, 474 residues long: Citrate synthase 4, mitochondrial (474 aa).

Residues 1 to 16 (MVFFRSVSAFTRLRSR) constitute a mitochondrion transit peptide. Residues H308, H354, and D409 contribute to the active site.

The protein belongs to the citrate synthase family. As to quaternary structure, homodimer.

The protein resides in the mitochondrion matrix. It carries out the reaction oxaloacetate + acetyl-CoA + H2O = citrate + CoA + H(+). Its pathway is carbohydrate metabolism; tricarboxylic acid cycle; isocitrate from oxaloacetate: step 1/2. In Arabidopsis thaliana (Mouse-ear cress), this protein is Citrate synthase 4, mitochondrial (CSY4).